Consider the following 548-residue polypeptide: CTP synthase (548 aa).

Residues 1–270 (MNRRSCAFIF…DTKISALLGC (270 aa)) are amidoligase domain. S17 is a binding site for CTP. S17 provides a ligand contact to UTP. ATP contacts are provided by residues 18–23 (SIGKGL) and D75. D75 and E143 together coordinate Mg(2+). CTP-binding positions include 150–152 (DIE), 190–195 (KTKPSQ), and K227. Residues 190–195 (KTKPSQ) and K227 contribute to the UTP site. The 244-residue stretch at 305–548 (YSGLCDAYIS…VRAGLLRKYS (244 aa)) folds into the Glutamine amidotransferase type-1 domain. G356 contributes to the L-glutamine binding site. The active-site Nucleophile; for glutamine hydrolysis is the C383. L-glutamine is bound by residues 384-387 (FGFQ), E407, and R475. Catalysis depends on residues H521 and E523.

It belongs to the CTP synthase family. As to quaternary structure, homotetramer.

The catalysed reaction is UTP + L-glutamine + ATP + H2O = CTP + L-glutamate + ADP + phosphate + 2 H(+). The enzyme catalyses L-glutamine + H2O = L-glutamate + NH4(+). It catalyses the reaction UTP + NH4(+) + ATP = CTP + ADP + phosphate + 2 H(+). It functions in the pathway pyrimidine metabolism; CTP biosynthesis via de novo pathway; CTP from UDP: step 2/2. Allosterically activated by GTP, when glutamine is the substrate; GTP has no effect on the reaction when ammonia is the substrate. The allosteric effector GTP functions by stabilizing the protein conformation that binds the tetrahedral intermediate(s) formed during glutamine hydrolysis. Inhibited by the product CTP, via allosteric rather than competitive inhibition. Catalyzes the ATP-dependent amination of UTP to CTP with either L-glutamine or ammonia as the source of nitrogen. Regulates intracellular CTP levels through interactions with the four ribonucleotide triphosphates. This chain is CTP synthase, found in Neorickettsia sennetsu (strain ATCC VR-367 / Miyayama) (Ehrlichia sennetsu).